A 413-amino-acid chain; its full sequence is DNA primase DnaG (413 aa).

The 79-residue stretch at 168–246 (PNLIIVEGRA…KIDYVARAPV (79 aa)) folds into the Toprim domain. Mg(2+) is bound by residues E174, D219, and D221.

This sequence belongs to the archaeal DnaG primase family. In terms of assembly, forms a ternary complex with MCM helicase and DNA. Component of the archaeal exosome complex. Requires Mg(2+) as cofactor.

The enzyme catalyses ssDNA + n NTP = ssDNA/pppN(pN)n-1 hybrid + (n-1) diphosphate.. RNA polymerase that catalyzes the synthesis of short RNA molecules used as primers for DNA polymerase during DNA replication. Also part of the exosome, which is a complex involved in RNA degradation. Acts as a poly(A)-binding protein that enhances the interaction between heteromeric, adenine-rich transcripts and the exosome. The protein is DNA primase DnaG of Metallosphaera sedula (strain ATCC 51363 / DSM 5348 / JCM 9185 / NBRC 15509 / TH2).